A 361-amino-acid chain; its full sequence is Peptide chain release factor 1 (361 aa).

Q235 carries the N5-methylglutamine modification. Residues 288–307 (AAEAQTRKLQVGSGDRSQRI) form a disordered region.

The protein belongs to the prokaryotic/mitochondrial release factor family. Post-translationally, methylated by PrmC. Methylation increases the termination efficiency of RF1.

It localises to the cytoplasm. Its function is as follows. Peptide chain release factor 1 directs the termination of translation in response to the peptide chain termination codons UAG and UAA. In Xanthomonas axonopodis pv. citri (strain 306), this protein is Peptide chain release factor 1.